A 187-amino-acid chain; its full sequence is Guanylate kinase (187 aa).

The region spanning 5-183 (GRLTVLTGPS…ALKQLETHMQ (179 aa)) is the Guanylate kinase-like domain. 12–19 (GPSGVGKG) is a binding site for ATP.

Belongs to the guanylate kinase family.

The protein resides in the cytoplasm. The catalysed reaction is GMP + ATP = GDP + ADP. It carries out the reaction dZMP + ATP = dZDP + ADP. Its pathway is purine metabolism. In terms of biological role, essential for recycling GMP and indirectly, cGMP. (Microbial infection) Catalyzes the phosphorylation of dZMP to dZDP, when the bacterium is infected by a phage that produces the substrate for the synthesis of dZTP (2- amino-2'-deoxyadenosine 5'-triphosphate), which is then used by the phage as a DNA polymerase substrate. The polypeptide is Guanylate kinase (Synechococcus sp. (strain CC9902)).